A 24-amino-acid polypeptide reads, in one-letter code: Erythromycin resistance leader peptide (24 aa).

Low complexity predominate over residues 1–14; the sequence is MSMGIAARPPRAAL. Positions 1–24 are disordered; the sequence is MSMGIAARPPRAALLPPPSVPRSR. Positions 15–24 are enriched in pro residues; sequence LPPPSVPRSR.

In terms of biological role, this peptide is involved in the control mechanism of the synthesis of the macrolide-lincosamide-streptogramin B resistance protein. The chain is Erythromycin resistance leader peptide from Streptomyces fradiae (Streptomyces roseoflavus).